Consider the following 285-residue polypeptide: Pantothenate synthetase (285 aa).

Position 30-37 (30-37 (MGNLHDGH)) interacts with ATP. His37 functions as the Proton donor in the catalytic mechanism. Gln61 is a (R)-pantoate binding site. Gln61 provides a ligand contact to beta-alanine. 149–152 (GEKD) contributes to the ATP binding site. Residue Gln155 participates in (R)-pantoate binding. ATP contacts are provided by residues Ile178 and 186–189 (LSSR).

The protein belongs to the pantothenate synthetase family. Homodimer.

It localises to the cytoplasm. It carries out the reaction (R)-pantoate + beta-alanine + ATP = (R)-pantothenate + AMP + diphosphate + H(+). It functions in the pathway cofactor biosynthesis; (R)-pantothenate biosynthesis; (R)-pantothenate from (R)-pantoate and beta-alanine: step 1/1. Catalyzes the condensation of pantoate with beta-alanine in an ATP-dependent reaction via a pantoyl-adenylate intermediate. The polypeptide is Pantothenate synthetase (Buchnera aphidicola subsp. Acyrthosiphon pisum (strain 5A)).